A 292-amino-acid chain; its full sequence is Peroxisomal 2,4-dienoyl-CoA reductase SPS19 [(3E)-enoyl-CoA-producing] (292 aa).

Positions 36, 85, and 145 each coordinate NADP(+). Ser-162 acts as the Proton donor in catalysis. An NADP(+)-binding site is contributed by Lys-180. Lys-180 acts as the Lowers pKa of active site Tyr in catalysis. Lys-188 is covalently cross-linked (Glycyl lysine isopeptide (Lys-Gly) (interchain with G-Cter in ubiquitin)). Ile-209 lines the NADP(+) pocket. A Microbody targeting signal motif is present at residues 290 to 292 (SKL).

Belongs to the short-chain dehydrogenases/reductases (SDR) family. Homodimer.

The protein resides in the peroxisome. The enzyme catalyses a (2E,4Z)-dienoyl-CoA + NADPH + H(+) = a 4,5-saturated-(3E)-enoyl-CoA + NADP(+). The catalysed reaction is a (2E,4E)-dienoyl-CoA + NADPH + H(+) = a 4,5-saturated-(3E)-enoyl-CoA + NADP(+). Auxiliary enzyme of beta-oxidation. Participates in the degradation of unsaturated fatty enoyl-CoA esters having double bonds in both even- and odd-numbered positions in peroxisome. Catalyzes the NADP-dependent reduction of 2,4-dienoyl-CoA to yield trans-3-enoyl-CoA. Dispensable for growth and sporulation on solid acetate and oleate media, but is essential for these processes to occur on petroselineate. The protein is Peroxisomal 2,4-dienoyl-CoA reductase SPS19 [(3E)-enoyl-CoA-producing] (SPS19) of Saccharomyces cerevisiae (strain ATCC 204508 / S288c) (Baker's yeast).